The chain runs to 128 residues: Putative pre-16S rRNA nuclease (128 aa).

It belongs to the YqgF nuclease family.

The protein resides in the cytoplasm. Could be a nuclease involved in processing of the 5'-end of pre-16S rRNA. The chain is Putative pre-16S rRNA nuclease from Campylobacter lari (strain RM2100 / D67 / ATCC BAA-1060).